We begin with the raw amino-acid sequence, 69 residues long: Alpha-conotoxin Mr1.7a (69 aa).

Residues 1 to 21 (MGMRMMFTVFLLVVLATTVVS) form the signal peptide. Residues 22–49 (FTSNRVLDPAFRRRNAAAKASDLIALNA) constitute a propeptide that is removed on maturation. Pro52 and Pro58 each carry 4-hydroxyproline; in Mr1.7b. Disulfide bonds link Cys54-Cys60 and Cys55-Cys68. The lacks the Ser-Xaa-Pro motif that is crucial for potent interaction with nAChR stretch occupies residues 56–58 (THP). Position 68 is a cysteine amide (Cys68).

This sequence belongs to the conotoxin A superfamily. In terms of processing, two 4-hydroxyprolines have been detected by MS but the assignment of which of the three prolines is modified is uncertain. As to expression, expressed by the venom duct.

It localises to the secreted. Functionally, acts as a co-agonist with PNU (an alpha-7 nAChR-selective allosteric modulator) at the endogenous alpha-7/CHRNA7 nicotinic acetylcholine receptors (nAChR) when tested in human SH-SY5Y neuroblastoma cells. Is the third alpha-conotoxin that acts as an agonist (after alpha-conotoxin SrIA/SrIB). Also acts as an antagonist at human alpha-7 nAChRs heterologously expressed in Xenopus oocytes. Has possibly a distinct nAChR binding mode from other alpha-conotoxins, due to a different three residue motif (lacks the Ser-Xaa-Pro motif). Its function is as follows. Acts as a weak partial agonist at alpha-7/CHRNA7 nicotinic acetylcholine receptors (nAChR) when tested in human SH-SY5Y neuroblastoma cells. Has possibly a distinct nAChR binding mode from other alpha-conotoxins, due to a different three residue motif (lacks the Ser-Xaa-Pro motif). The polypeptide is Alpha-conotoxin Mr1.7a (Conus marmoreus (Marble cone)).